A 604-amino-acid chain; its full sequence is Glutamine--fructose-6-phosphate aminotransferase [isomerizing] (604 aa).

Cysteine 2 functions as the Nucleophile; for GATase activity in the catalytic mechanism. The Glutamine amidotransferase type-2 domain maps to 2 to 219; sequence CGIMGAVSER…EGDSACVTTQ (218 aa). SIS domains lie at 279 to 427 and 454 to 594; these read LRAS…DNRA and LASL…VDQP. Lysine 599 acts as the For Fru-6P isomerization activity in catalysis.

In terms of assembly, homodimer.

The protein localises to the cytoplasm. The enzyme catalyses D-fructose 6-phosphate + L-glutamine = D-glucosamine 6-phosphate + L-glutamate. Its function is as follows. Catalyzes the first step in hexosamine metabolism, converting fructose-6P into glucosamine-6P using glutamine as a nitrogen source. The chain is Glutamine--fructose-6-phosphate aminotransferase [isomerizing] from Legionella pneumophila subsp. pneumophila (strain Philadelphia 1 / ATCC 33152 / DSM 7513).